Here is a 162-residue protein sequence, read N- to C-terminus: Cyanate hydratase (162 aa).

Catalysis depends on residues R102, E105, and S128.

It belongs to the cyanase family.

It carries out the reaction cyanate + hydrogencarbonate + 3 H(+) = NH4(+) + 2 CO2. Its function is as follows. Catalyzes the reaction of cyanate with bicarbonate to produce ammonia and carbon dioxide. The polypeptide is Cyanate hydratase (Mycosarcoma maydis (Corn smut fungus)).